A 437-amino-acid chain; its full sequence is Inactive peptidyl-prolyl cis-trans isomerase shutdown (437 aa).

One can recognise a PPIase FKBP-type domain in the interval 92–178; it reads DSEVTIHYAA…RPEPALFVIV (87 aa). TPR repeat units lie at residues 209–242, 258–294, and 295–327; these read VNAL…LRLS, VNAY…EKHC, and KALY…EPKN.

The protein belongs to the FKBP6 family. As to quaternary structure, interacts with Hsp83.

It is found in the cytoplasm. Co-chaperone required during oogenesis to repress transposable elements and prevent their mobilization, which is essential for the germline integrity. Acts via the piRNA metabolic process, which mediates the repression of transposable elements during meiosis by forming complexes composed of piRNAs and Piwi proteins and govern the methylation and subsequent repression of transposons. Acts as a co-chaperone via its interaction with Hsp83/HSP90 and is required for the biogenesis of all three piRNA major populations. The protein is Inactive peptidyl-prolyl cis-trans isomerase shutdown (shu) of Bombyx mori (Silk moth).